A 259-amino-acid polypeptide reads, in one-letter code: Small ribosomal subunit protein uS2 (259 aa).

Belongs to the universal ribosomal protein uS2 family.

The chain is Small ribosomal subunit protein uS2 from Fervidobacterium nodosum (strain ATCC 35602 / DSM 5306 / Rt17-B1).